The following is a 427-amino-acid chain: Glutamate-1-semialdehyde 2,1-aminomutase (427 aa).

Lysine 265 is subject to N6-(pyridoxal phosphate)lysine.

It belongs to the class-III pyridoxal-phosphate-dependent aminotransferase family. HemL subfamily. As to quaternary structure, homodimer. It depends on pyridoxal 5'-phosphate as a cofactor.

The protein resides in the cytoplasm. It carries out the reaction (S)-4-amino-5-oxopentanoate = 5-aminolevulinate. It functions in the pathway porphyrin-containing compound metabolism; protoporphyrin-IX biosynthesis; 5-aminolevulinate from L-glutamyl-tRNA(Glu): step 2/2. The polypeptide is Glutamate-1-semialdehyde 2,1-aminomutase (Burkholderia thailandensis (strain ATCC 700388 / DSM 13276 / CCUG 48851 / CIP 106301 / E264)).